A 765-amino-acid polypeptide reads, in one-letter code: Probable dipeptidyl peptidase 4 (765 aa).

The signal sequence occupies residues 1 to 14 (MKWSILLLVGCAAA). Asparagine 35, asparagine 78, asparagine 101, asparagine 110, asparagine 169, asparagine 218, asparagine 465, and asparagine 490 each carry an N-linked (GlcNAc...) asparagine glycan. Serine 613 functions as the Charge relay system in the catalytic mechanism. Asparagine 665 carries an N-linked (GlcNAc...) asparagine glycan. Active-site charge relay system residues include aspartate 690 and histidine 725.

It belongs to the peptidase S9B family.

It is found in the secreted. The enzyme catalyses Release of an N-terminal dipeptide, Xaa-Yaa-|-Zaa-, from a polypeptide, preferentially when Yaa is Pro, provided Zaa is neither Pro nor hydroxyproline.. Its function is as follows. Extracellular dipeptidyl-peptidase which removes N-terminal dipeptides sequentially from polypeptides having unsubstituted N-termini provided that the penultimate residue is proline. The protein is Probable dipeptidyl peptidase 4 (dpp4) of Neosartorya fischeri (strain ATCC 1020 / DSM 3700 / CBS 544.65 / FGSC A1164 / JCM 1740 / NRRL 181 / WB 181) (Aspergillus fischerianus).